The following is a 3550-amino-acid chain: Zinc finger homeobox protein 4 (3550 aa).

Residue Met1 is modified to N-acetylmethionine. 3 disordered regions span residues 1 to 54, 426 to 479, and 521 to 614; these read METC…LKTD, HLSS…AYSN, and TSSS…IECP. Over residues 9-20 the composition is skewed to polar residues; sequence ISRQENGQSTSK. 2 stretches are compositionally biased toward basic and acidic residues: residues 39 to 54 and 433 to 451; these read EPDRENSSSHDNLKTD and KMSESKDQENNCERPKEST. The segment covering 467-479 has biased composition (acidic residues); that stretch reads EPGDEDEEDAYSN. Polar residues-rich tracts occupy residues 542–553 and 566–576; these read GRSNGNVTNSYS and RDGTTAAPSET. 3 consecutive C2H2-type zinc fingers follow at residues 611–634, 642–665, and 697–721; these read IECPKCDTVLGSSRSLGGHMTMMH, LKCPKCNWHYKYQQTLEAHMKEKH, and FRCEVCNYSTTTKGNLSIHMQSDKH. The interval 739-763 is disordered; sequence HSAPTPNTSLSGCGTPSPSKPKQKP. A compositionally biased stretch (polar residues) spans 742–752; that stretch reads PTPNTSLSGCG. C2H2-type zinc fingers lie at residues 765-787, 915-939, 971-993, and 1019-1043; these read RRCEVCDYETNVARNLRIHMTSE, YQCKLCNYNTQLKANFQLHCKTDKH, LKCNACDYYTNSVDKLRLHTTNH, and YYCAVCDYSSKIKLNLVQHVRSVKH. Residues 1100–1142 are disordered; sequence KAASEEPSEDAGDPLKPPTVAEDDEKEAHKRDNSEGKISTKDP. A compositionally biased stretch (basic and acidic residues) spans 1125-1142; sequence KEAHKRDNSEGKISTKDP. A Glycyl lysine isopeptide (Lys-Gly) (interchain with G-Cter in SUMO2) cross-link involves residue Lys1165. C2H2-type zinc fingers lie at residues 1188–1211 and 1217–1240; these read YQYPCCNYNSRDQSRIQMHVLSQH and ICCPLCQDVLSNKMHLQLHLTHLH. A disordered region spans residues 1271 to 1339; sequence APEKSEQDPP…EWNKTSSKDV (69 aa). Residues 1297–1326 show a composition bias toward basic and acidic residues; sequence VDDKSMSGLEDSKVGVEIKNEEQKPAKEPV. A Glycyl lysine isopeptide (Lys-Gly) (interchain with G-Cter in SUMO2) cross-link involves residue Lys1315. 2 consecutive C2H2-type zinc fingers follow at residues 1368–1390 and 1396–1419; these read YRCNHCSLAFKTMQKLQIHSQYH and TMCTLCQRSFRTFQALKKHLEAGH. Positions 1467–1492 are disordered; sequence EGKASPVESDGSSIPDDLGLEPKRTL. Residues 1512–1538 form a C2H2-type 12 zinc finger; it reads YKCTVCKESFTQKNILLVHYNSVSHLH. Residue Lys1562 forms a Glycyl lysine isopeptide (Lys-Gly) (interchain with G-Cter in SUMO2) linkage. The segment at 1564–1588 adopts a C2H2-type 13 zinc-finger fold; sequence YKCSTCSVAYSQSSTLEIHMRSVLH. The tract at residues 1779-1873 is disordered; that stretch reads PQLQPQNQQP…CIPPPRIASG (95 aa). The segment covering 1792–1808 has biased composition (low complexity); it reads QQQQPQQQPSKLLKQEQ. Lys1805 participates in a covalent cross-link: Glycyl lysine isopeptide (Lys-Gly) (interchain with G-Cter in SUMO2). The segment covering 1823–1860 has biased composition (basic and acidic residues); that stretch reads PSYKEAEEVTEKQEKPKQEFINDTEGLKDSKDIKKQKS. The C2H2-type 14 zinc-finger motif lies at 1916-1939; the sequence is LECGICGKLFSNVLILKSHQEHVH. Residues 1984–2006 form a disordered region; that stretch reads KIPNTVSAPLQAPPPTPPSAPQQ. The segment covering 1994-2003 has biased composition (pro residues); that stretch reads QAPPPTPPSA. DNA-binding regions (homeobox) lie at residues 2069–2128 and 2166–2225; these read FKRP…RQRN and KRSS…RKSY. The C2H2-type 15; degenerate zinc finger occupies 2252–2276; the sequence is YQCKKCNVVFPRIFDLITHQKKQCY. A compositionally biased stretch (polar residues) spans 2318-2331; it reads TLVASSGSGTSTPL. The disordered stretch occupies residues 2318-2412; that stretch reads TLVASSGSGT…SQTPIPSSPL (95 aa). Over residues 2337–2355 the composition is skewed to basic and acidic residues; that stretch reads PEPEKNSPKTEYPGEKTKQ. Positions 2356–2376 are enriched in polar residues; sequence SDPSLPQGTKSAPSSVLTSSE. Positions 2383–2392 are enriched in pro residues; the sequence is PQPPTQPPKQ. A compositionally biased stretch (polar residues) spans 2401–2412; the sequence is SASQTPIPSSPL. A C2H2-type 16 zinc finger spans residues 2430–2452; sequence YPCDQCTLAFPTLELWKEHQHMH. Polar residues predominate over residues 2490–2508; that stretch reads GSSLTQMPPQTSTAHTTAP. Residues 2490 to 2545 are disordered; the sequence is GSSLTQMPPQTSTAHTTAPASVAASLKRKLEDKEDNNCSEKEGGNSGEDQHRDKRL. Positions 2517 to 2541 are enriched in basic and acidic residues; it reads RKLEDKEDNNCSEKEGGNSGEDQHR. Positions 2542 to 2601 form a DNA-binding region, homeobox 3; the sequence is DKRLRTTITPEQLEILYEKYLLDSNPTRKMLDHIAREVGLKKRVVQVWFQNTRARERKGQ. A C2H2-type 17 zinc finger spans residues 2612 to 2635; that stretch reads KRCPFCRALFKAKSALESHIRSRH. Ser2645 carries the phosphoserine modification. Disordered regions lie at residues 2746–2791 and 2810–2866; these read AISD…ATTP and HFND…PGHK. Residues 2781–2791 are compositionally biased toward polar residues; that stretch reads LDSLQKPATTP. The span at 2811 to 2820 shows a compositional bias: basic and acidic residues; that stretch reads FNDKDGDHDQ. The span at 2843 to 2855 shows a compositional bias: low complexity; that stretch reads PSSPNPFGSSNPF. Residues 2865–2924 constitute a DNA-binding region (homeobox 4); the sequence is HKRFRTQMSNLQLKVLKACFSDYRTPTMQECEMLGNEIGLPKRVVQVWFQNARAKERKFK. A C2H2-type 18 zinc finger spans residues 2943–2967; the sequence is PECTLCGVKYSARLSIRDHIFSKQH. Disordered regions lie at residues 3051-3156 and 3261-3318; these read PSSL…EEKI and QDSL…VQLD. A compositionally biased stretch (polar residues) spans 3058-3068; the sequence is PQNSNTLTSPG. Residues 3075 to 3088 show a composition bias toward low complexity; the sequence is PSSATSSPALSLSS. The span at 3097 to 3109 shows a compositional bias: pro residues; it reads TPPPPPPPPPPPS. The segment covering 3136–3156 has biased composition (basic and acidic residues); that stretch reads IKEEESEAIKPEKHPKKEEKI. Lys3137 participates in a covalent cross-link: Glycyl lysine isopeptide (Lys-Gly) (interchain with G-Cter in SUMO2). The stretch at 3248–3277 forms a coiled coil; that stretch reads ALLQQYQQYQQSLQDSLQKQQKQQQEQQQK. Low complexity predominate over residues 3261-3276; it reads QDSLQKQQKQQQEQQQ. Residues 3298 to 3318 show a composition bias toward basic and acidic residues; it reads SETKEEKSTAPESTKEEVQLD. A C2H2-type 19; degenerate zinc finger spans residues 3337–3361; sequence FVCRKCQMMFTDEDATVNHQKSFCY. The C2H2-type 20 zinc finger occupies 3381 to 3405; the sequence is YQCLACDLALSGNEALSQHLQSSLH. The segment at 3424-3445 is disordered; the sequence is LPHSVCSPPPNTSSTSPSAASS. The segment covering 3435–3445 has biased composition (low complexity); the sequence is TSSTSPSAASS.

This sequence belongs to the krueppel C2H2-type zinc-finger protein family. In terms of tissue distribution, expressed in brain, heart, lung, muscle and small intestine. No expression detected in undifferentiated P19 cells, however, expression was seen following retinoic acid treatment to induce neuronal differentiation. Expressed in undifferentiated C2C12 cells, following induction of muscle differentiation in a low-serum medium, expression levels were decreased.

The protein localises to the nucleus. In terms of biological role, may play a role in neural and muscle differentiation. May be involved in transcriptional regulation. The chain is Zinc finger homeobox protein 4 (Zfhx4) from Mus musculus (Mouse).